A 243-amino-acid polypeptide reads, in one-letter code: tRNA (guanine-N(1)-)-methyltransferase (243 aa).

Residues Gly111 and 130–135 (IGDYVL) each bind S-adenosyl-L-methionine.

The protein belongs to the RNA methyltransferase TrmD family. Homodimer.

It is found in the cytoplasm. The catalysed reaction is guanosine(37) in tRNA + S-adenosyl-L-methionine = N(1)-methylguanosine(37) in tRNA + S-adenosyl-L-homocysteine + H(+). In terms of biological role, specifically methylates guanosine-37 in various tRNAs. This chain is tRNA (guanine-N(1)-)-methyltransferase, found in Acholeplasma laidlawii (strain PG-8A).